We begin with the raw amino-acid sequence, 280 residues long: Ataxin-3 homolog (280 aa).

The Josephin domain maps to 7–187 (GGMLYHEVQE…QECPMSSSSE (181 aa)). Cys20 serves as the catalytic Nucleophile. His126 acts as the Proton acceptor in catalysis. Asp141 is a catalytic residue. Composition is skewed to polar residues over residues 183–194 (SSSSEASNSFGQ) and 221–232 (DNVNQQRRNQAL). The disordered stretch occupies residues 183–240 (SSSSEASNSFGQWLSPEDAERIRKNTSSGSSARNKRSNDNVNQQRRNQALSREEVQAF). The 20-residue stretch at 243-262 (MEDDDLKAAIAASLLDASAA) folds into the UIM domain.

The protein localises to the nucleus. The catalysed reaction is Thiol-dependent hydrolysis of ester, thioester, amide, peptide and isopeptide bonds formed by the C-terminal Gly of ubiquitin (a 76-residue protein attached to proteins as an intracellular targeting signal).. Its function is as follows. Interacts with key regulators of transcription and represses transcription. Acts as a histone-binding protein that regulates transcription. Acts as a deubiquitinating enzyme. This Arabidopsis thaliana (Mouse-ear cress) protein is Ataxin-3 homolog.